Consider the following 271-residue polypeptide: Formamidopyrimidine-DNA glycosylase (271 aa).

Catalysis depends on P2, which acts as the Schiff-base intermediate with DNA. The active-site Proton donor is E3. Residue K58 is the Proton donor; for beta-elimination activity of the active site. 3 residues coordinate DNA: H92, R111, and R152. The FPG-type zinc-finger motif lies at 237 to 271 (FVYGRQQQPCKQCGSLLRQTTIRQRTTVWCGHCQG). The active-site Proton donor; for delta-elimination activity is the R261.

It belongs to the FPG family. Monomer. Zn(2+) serves as cofactor.

The enzyme catalyses Hydrolysis of DNA containing ring-opened 7-methylguanine residues, releasing 2,6-diamino-4-hydroxy-5-(N-methyl)formamidopyrimidine.. It carries out the reaction 2'-deoxyribonucleotide-(2'-deoxyribose 5'-phosphate)-2'-deoxyribonucleotide-DNA = a 3'-end 2'-deoxyribonucleotide-(2,3-dehydro-2,3-deoxyribose 5'-phosphate)-DNA + a 5'-end 5'-phospho-2'-deoxyribonucleoside-DNA + H(+). In terms of biological role, involved in base excision repair of DNA damaged by oxidation or by mutagenic agents. Acts as a DNA glycosylase that recognizes and removes damaged bases. Has a preference for oxidized purines, such as 7,8-dihydro-8-oxoguanine (8-oxoG). Has AP (apurinic/apyrimidinic) lyase activity and introduces nicks in the DNA strand. Cleaves the DNA backbone by beta-delta elimination to generate a single-strand break at the site of the removed base with both 3'- and 5'-phosphates. This chain is Formamidopyrimidine-DNA glycosylase (mutM1), found in Xylella fastidiosa (strain 9a5c).